A 247-amino-acid polypeptide reads, in one-letter code: MIERYFQKVNERLELVLKNERENLKKAAYVVSEAIQKGGIIQLFGCGHSHILTEEVFYRAGGLVPIKPIFFEPLMLHEGAVRSSMLERINDLAHEFMADEDIRREDVFFVLSTSGRNPVPIDVALTAKNKGAYTIVITSLEYSMSQPSRHKSGKLLYEVADLVINNYSVKGDAILSHESVSVPFSPTSTVVGCTILNAIFAEAIVLMAENGFEPPIFLSGNIEGADDHNNKIIEKYKDRIPILIGKS.

Residues Val31 to Pro214 form the SIS domain.

The protein belongs to the UPF0309 family.

This chain is UPF0309 protein GWCH70_1414, found in Geobacillus sp. (strain WCH70).